Consider the following 416-residue polypeptide: Protein-lysine N-trimethyltransferase SMYD5 (416 aa).

The 331-residue stretch at 21-351 (GSVEVRYVDS…PGEEICISYL (331 aa)) folds into the SET domain. Residues 98–136 (PELCSVRKDLHQNCPHCQVMYCSAECRLAAAEQYHQILC) form an MYND-type zinc finger. Tyr350 is a binding site for S-adenosyl-L-methionine. Residues 383 to 416 (EADDPNVTSEEEEEEDEEEGEPEDAELGDEMTDV) are disordered.

The protein belongs to the class V-like SAM-binding methyltransferase superfamily. Interacts with the N-CoR complex. Interacts with EHMT2 and CBX5. Ubiquitinated and degradaed by the proteasome in response to mild hypothermia (32 degrees Celsius), relieving repression of the SP1 gene.

It localises to the cytoplasm. It carries out the reaction L-lysyl-[protein] + 3 S-adenosyl-L-methionine = N(6),N(6),N(6)-trimethyl-L-lysyl-[protein] + 3 S-adenosyl-L-homocysteine + 3 H(+). It catalyses the reaction L-lysyl(20)-[histone H4] + 3 S-adenosyl-L-methionine = N(6),N(6),N(6)-trimethyl-L-lysyl(20)-[histone H4] + 3 S-adenosyl-L-homocysteine + 3 H(+). The catalysed reaction is L-lysyl(36)-[histone H3] + 3 S-adenosyl-L-methionine = N(6),N(6),N(6)-trimethyl-L-lysyl(36)-[histone H3] + 3 S-adenosyl-L-homocysteine + 3 H(+). Protein-lysine N-trimethyltransferase that specifically catalyzes trimethylation of 'Lys-22' of the RPL40/eL40 subunit of the 60S ribosome, thereby promoting translation elongation and protein synthesis. May also act as a histone methyltransferase in the context of histone octamers, but not on nucleosome substrates: trimethylates 'Lys-36' of histone H3 and 'Lys-20' of histone H4 to form H3K36me3 and H4K20me3, respectively. The histone methyltransferase activity, which is independent of its SET domain, is however unsure in vivo. In association with the NCoR corepressor complex, involved in the repression of toll-like receptor 4 (TLR4)-target inflammatory genes in macrophages, possibly by catalyzing the formation of H4K20me3 at the gene promoters. Plays an important role in embryonic stem (ES) cell self-renewal and differentiation. Maintains genome stability of ES cells during differentiation through regulation of heterochromatin formation and repression of endogenous repetitive DNA elements by promoting H4K20me3 marks. Acts as a regulator of the hypothermia response: its degradation in response to mild hypothermia relieves the formation of H3K36me3 at gene promoters, allowing expression of the neuroprotective gene SP1. In Mus musculus (Mouse), this protein is Protein-lysine N-trimethyltransferase SMYD5.